Reading from the N-terminus, the 273-residue chain is Putative phosphoenolpyruvate synthase regulatory protein (273 aa).

Residue 153–160 coordinates ADP; sequence GVSRSGKT.

Belongs to the pyruvate, phosphate/water dikinase regulatory protein family. PSRP subfamily.

The catalysed reaction is [pyruvate, water dikinase] + ADP = [pyruvate, water dikinase]-phosphate + AMP + H(+). It catalyses the reaction [pyruvate, water dikinase]-phosphate + phosphate + H(+) = [pyruvate, water dikinase] + diphosphate. Its function is as follows. Bifunctional serine/threonine kinase and phosphorylase involved in the regulation of the phosphoenolpyruvate synthase (PEPS) by catalyzing its phosphorylation/dephosphorylation. This chain is Putative phosphoenolpyruvate synthase regulatory protein, found in Leptothrix cholodnii (strain ATCC 51168 / LMG 8142 / SP-6) (Leptothrix discophora (strain SP-6)).